The primary structure comprises 436 residues: GTPase Der (436 aa).

EngA-type G domains are found at residues 4-167 (PTVA…PTEV) and 175-351 (IRFS…ESQN). GTP is bound by residues 10-17 (GRPNVGKS), 57-61 (DTGGI), 119-122 (NKVD), 181-188 (GRPNVGKS), 229-233 (DTAGM), and 294-297 (NKWD). One can recognise a KH-like domain in the interval 352-436 (RRISSAVLND…PIHLIARKRK (85 aa)).

Belongs to the TRAFAC class TrmE-Era-EngA-EngB-Septin-like GTPase superfamily. EngA (Der) GTPase family. Associates with the 50S ribosomal subunit.

In terms of biological role, GTPase that plays an essential role in the late steps of ribosome biogenesis. The protein is GTPase Der of Streptococcus thermophilus (strain ATCC BAA-491 / LMD-9).